Here is a 198-residue protein sequence, read N- to C-terminus: Transcription factor FapR (198 aa).

A MaoC-like domain is found at 102-167 (TRIARGHHLF…HGRTIVEVNS (66 aa)).

This sequence belongs to the FapR family.

Functionally, transcriptional factor involved in regulation of membrane lipid biosynthesis by repressing genes involved in fatty acid and phospholipid metabolism. This is Transcription factor FapR from Geobacillus kaustophilus (strain HTA426).